Here is a 354-residue protein sequence, read N- to C-terminus: GTPase Obg (354 aa).

The 159-residue stretch at 1-159 folds into the Obg domain; that stretch reads MKFVDEVKIH…RDLVLELKLL (159 aa). The OBG-type G domain occupies 160–333; the sequence is ADVGIVGYPN…LLDAVGRALF (174 aa). GTP-binding positions include 166-173, 191-195, 212-215, 283-286, and 314-316; these read GYPNAGKS, FTTLT, DIPG, TKID, and SAV. The Mg(2+) site is built by serine 173 and threonine 193.

The protein belongs to the TRAFAC class OBG-HflX-like GTPase superfamily. OBG GTPase family. Monomer. Requires Mg(2+) as cofactor.

It localises to the cytoplasm. In terms of biological role, an essential GTPase which binds GTP, GDP and possibly (p)ppGpp with moderate affinity, with high nucleotide exchange rates and a fairly low GTP hydrolysis rate. Plays a role in control of the cell cycle, stress response, ribosome biogenesis and in those bacteria that undergo differentiation, in morphogenesis control. This Anaeromyxobacter dehalogenans (strain 2CP-1 / ATCC BAA-258) protein is GTPase Obg.